A 130-amino-acid chain; its full sequence is Cystatin (130 aa).

An N-terminal signal peptide occupies residues 1 to 19 (MEWKIVVPLLAVAFTVANA). A Secondary area of contact motif is present at residues 67 to 71 (QVVSG). 2 disulfide bridges follow: Cys85-Cys94 and Cys108-Cys128.

Belongs to the cystatin family. As to expression, ubiquitous expression including brain, white muscle, heart, gill, kidney, spleen, liver and skin with the highest and lowest level in brain and gill, respectively.

The protein localises to the secreted. In terms of biological role, cysteine proteinase inhibitor. The protein is Cystatin of Oncorhynchus keta (Chum salmon).